The primary structure comprises 98 residues: Cell division topological specificity factor (98 aa).

Belongs to the MinE family.

Its function is as follows. Prevents the cell division inhibition by proteins MinC and MinD at internal division sites while permitting inhibition at polar sites. This ensures cell division at the proper site by restricting the formation of a division septum at the midpoint of the long axis of the cell. The protein is Cell division topological specificity factor of Moorella thermoacetica (strain ATCC 39073 / JCM 9320).